Reading from the N-terminus, the 153-residue chain is MSTANPPADLVEMWTDGACKGNPGPGGWGVLMRYGSHEKTFFGGDPQTTNNRMEILAVVEGLRALKRACTVVIHTDSQYVMKGMTEWLPNWKRRGWLTADKKPVKNAELWQLLDAQVARHEVRWQWVRGHNGDPGNEMADMLANQGVASVARN.

The RNase H type-1 domain occupies 7–148 (PADLVEMWTD…ADMLANQGVA (142 aa)). The Mg(2+) site is built by aspartate 16, glutamate 54, aspartate 76, and aspartate 140.

The protein belongs to the RNase H family. Monomer. Requires Mg(2+) as cofactor.

It is found in the cytoplasm. It catalyses the reaction Endonucleolytic cleavage to 5'-phosphomonoester.. In terms of biological role, endonuclease that specifically degrades the RNA of RNA-DNA hybrids. The protein is Ribonuclease H of Bordetella avium (strain 197N).